A 147-amino-acid polypeptide reads, in one-letter code: Large ribosomal subunit protein uL15 (147 aa).

The disordered stretch occupies residues 1 to 46 (MSIRLENLSYTPGARKEKHRKGRGHAAGKGKQAGRGQSGQKKRSTV). Basic residues predominate over residues 16-28 (KEKHRKGRGHAAG).

This sequence belongs to the universal ribosomal protein uL15 family. As to quaternary structure, part of the 50S ribosomal subunit.

In terms of biological role, binds to the 23S rRNA. This Mesomycoplasma hyopneumoniae (strain 232) (Mycoplasma hyopneumoniae) protein is Large ribosomal subunit protein uL15.